The following is a 144-amino-acid chain: Small ribosomal subunit protein bS6 (144 aa).

The interval 92 to 144 (KVDGHDEGPSVQMQKRDDRGDREERGDRGDRGDRGPRGDRGPREDRGPRPERR) is disordered. Positions 93–144 (VDGHDEGPSVQMQKRDDRGDREERGDRGDRGDRGPRGDRGPREDRGPRPERR) are enriched in basic and acidic residues.

The protein belongs to the bacterial ribosomal protein bS6 family.

Its function is as follows. Binds together with bS18 to 16S ribosomal RNA. This is Small ribosomal subunit protein bS6 (rpsF) from Rhodobacter capsulatus (strain ATCC BAA-309 / NBRC 16581 / SB1003).